Here is a 252-residue protein sequence, read N- to C-terminus: Probable endonuclease 4 (252 aa).

Zn(2+) is bound by residues His56, His96, Glu129, Asp162, His165, His191, Asp204, His206, and Glu233.

The protein belongs to the AP endonuclease 2 family. Zn(2+) is required as a cofactor.

It catalyses the reaction Endonucleolytic cleavage to 5'-phosphooligonucleotide end-products.. Its function is as follows. Endonuclease IV plays a role in DNA repair. It cleaves phosphodiester bonds at apurinic or apyrimidinic (AP) sites, generating a 3'-hydroxyl group and a 5'-terminal sugar phosphate. The protein is Probable endonuclease 4 of Mycobacterium leprae (strain Br4923).